The sequence spans 148 residues: Putative nickel-responsive regulator (148 aa).

The Ni(2+) site is built by H88, H99, H101, and C107.

It belongs to the transcriptional regulatory CopG/NikR family. The cofactor is Ni(2+).

Its function is as follows. Transcriptional regulator. In Helicobacter pylori (strain P12), this protein is Putative nickel-responsive regulator.